A 320-amino-acid polypeptide reads, in one-letter code: Ribosomal RNA small subunit methyltransferase H (320 aa).

Residues 42–44, Asp-62, Phe-86, Asp-108, and Gln-115 each bind S-adenosyl-L-methionine; that span reads GGH.

The protein belongs to the methyltransferase superfamily. RsmH family.

The protein localises to the cytoplasm. It catalyses the reaction cytidine(1402) in 16S rRNA + S-adenosyl-L-methionine = N(4)-methylcytidine(1402) in 16S rRNA + S-adenosyl-L-homocysteine + H(+). Specifically methylates the N4 position of cytidine in position 1402 (C1402) of 16S rRNA. The chain is Ribosomal RNA small subunit methyltransferase H from Yersinia enterocolitica serotype O:8 / biotype 1B (strain NCTC 13174 / 8081).